The primary structure comprises 1358 residues: Tenascin-R (1358 aa).

The N-terminal stretch at 1-31 (MGADGETVVLKNMLIGINLILLGSMIKPSEC) is a signal peptide. 2 O-linked (GalNAc...) threonine glycosylation sites follow: Thr36 and Thr37. Asn55 carries an N-linked (GlcNAc...) asparagine glycan. Positions 127-157 (CASSAQVLQELLSRIEMLEREVSVLRDQCNA) form a coiled coil. O-linked (Xyl...) (chondroitin sulfate) serine glycosylation occurs at Ser176. 2 N-linked (GlcNAc...) asparagine glycosylation sites follow: Asn180 and Asn198. EGF-like domains lie at 188–199 (CICNEGWFGKNC), 219–230 (CICDSEYSGDDC), and 250–261 (CVCEEPYTGEDC). An O-linked (Xyl...) (chondroitin sulfate) serine glycan is attached at Ser271. N-linked (GlcNAc...) asparagine glycosylation is present at Asn278. In terms of domain architecture, EGF-like 4 spans 281–292 (CLCEEGYVGEDC). Cystine bridges form between Cys292–Cys301, Cys297–Cys312, and Cys314–Cys323. Ser302 is a glycosylation site (O-linked (Xyl...) (chondroitin sulfate) serine). The EGF-like 5 domain maps to 312–323 (CVCEEGYQGPDC). Fibronectin type-III domains follow at residues 328–420 (PPED…TPQG), 421–505 (LQFK…TVID), 506–595 (GPTQ…TEID), 596–687 (APKN…TELD), 688–777 (SPRD…FRPI), 778–865 (SHLH…TGID), 866–955 (PPKD…AMDN), 956–1042 (PVDL…TLLD), and 1043–1130 (PPAN…TGGR). N-linked (GlcNAc...) asparagine glycans are attached at residues Asn392, Asn470, and Asn581. Residue Ser724 is modified to Phosphoserine. N-linked (GlcNAc...) asparagine glycans are attached at residues Asn791, Asn874, Asn1036, Asn1046, and Asn1261. Residues 1129–1344 (GRVFPHPQDC…FVEMKMRPYN (216 aa)) enclose the Fibrinogen C-terminal domain.

Belongs to the tenascin family. As to quaternary structure, forms oligomers. Interacts with CNTN1, TNC, and FN1. Interacts with BCAN and ACAN in a calcium-dependent manner. Interacts with SCN2B, PTPRZ1, and CSPG3. In terms of processing, contains N-linked oligosaccharides, O-linked sialylated structures and O-linked chondroitin sulfate glycosaminoglycans. Contains N-linked oligosaccharides with a sulfated carbohydrate structure. O-glycosylated on Thr-36 or Thr-37 with a core 1 or possibly core 8 glycan. As to expression, brain specific.

It localises to the secreted. The protein localises to the extracellular space. Its subcellular location is the extracellular matrix. Neural extracellular matrix (ECM) protein involved in interactions with different cells and matrix components. These interactions can influence cellular behavior by either evoking a stable adhesion and differentiation, or repulsion and inhibition of neurite growth. Binding to cell surface gangliosides inhibits RGD-dependent integrin-mediated cell adhesion and results in an inhibition of PTK2/FAK1 (FAK) phosphorylation and cell detachment. Binding to membrane surface sulfatides results in a oligodendrocyte adhesion and differentiation. Interaction with CNTN1 induces a repulsion of neurons and an inhibition of neurite outgrowth. Interacts with SCN2B may play a crucial role in clustering and regulation of activity of sodium channels at nodes of Ranvier. TNR-linked chondroitin sulfate glycosaminoglycans are involved in the interaction with FN1 and mediate inhibition of cell adhesion and neurite outgrowth. The highly regulated addition of sulfated carbohydrate structure may modulate the adhesive properties of TNR over the course of development and during synapse maintenance. The sequence is that of Tenascin-R (TNR) from Homo sapiens (Human).